Here is a 447-residue protein sequence, read N- to C-terminus: METKQIQETINMVEEEHLDIRTVTMGISLLDTIAGDPQQTAKNIYKKVTTYAKDLIKVAEQIEREYGIPITNKRISVTPIALIAGHATPDDMLYYAHALDDAAKAVGVDFIGGYSALVQKGFANGDLALIKSLPRALTETDLVMSSVNIGSTKAGINLDAIKLMGETVKGISEKSDTANAKLVIFANAVEDNPFMAGAFHGVSEADVVINVGVSGPGVVKRALEKVKGESIQVVAETVKKTAFKITRVGQMVGALAAERLGVEFGIVDLSLAPTPARGDSVAEVLEEIGLEQVGTHGTTAALMLLNDAVKKGGVMASQRVGGLSGAFIPVSEDAGMIDAAKEGTLTLSKLEAMTAVCSVGLDMIAIPGDTSATTISAMIADEAAIGVQNNKTTAVRILPTLGTKVGDMVDYGGLLGTAPVMPVVEKSSADFINRGGHIPAPIHSFKN.

Belongs to the UPF0210 family. In terms of assembly, homodimer.

The chain is UPF0210 protein LEUM_1180 from Leuconostoc mesenteroides subsp. mesenteroides (strain ATCC 8293 / DSM 20343 / BCRC 11652 / CCM 1803 / JCM 6124 / NCDO 523 / NBRC 100496 / NCIMB 8023 / NCTC 12954 / NRRL B-1118 / 37Y).